The primary structure comprises 312 residues: Methionyl-tRNA formyltransferase (312 aa).

110-113 (SLLP) provides a ligand contact to (6S)-5,6,7,8-tetrahydrofolate.

This sequence belongs to the Fmt family.

The catalysed reaction is L-methionyl-tRNA(fMet) + (6R)-10-formyltetrahydrofolate = N-formyl-L-methionyl-tRNA(fMet) + (6S)-5,6,7,8-tetrahydrofolate + H(+). In terms of biological role, attaches a formyl group to the free amino group of methionyl-tRNA(fMet). The formyl group appears to play a dual role in the initiator identity of N-formylmethionyl-tRNA by promoting its recognition by IF2 and preventing the misappropriation of this tRNA by the elongation apparatus. This is Methionyl-tRNA formyltransferase from Mycobacterium ulcerans (strain Agy99).